A 186-amino-acid chain; its full sequence is Ribosome-recycling factor (186 aa).

The protein belongs to the RRF family.

It localises to the cytoplasm. In terms of biological role, responsible for the release of ribosomes from messenger RNA at the termination of protein biosynthesis. May increase the efficiency of translation by recycling ribosomes from one round of translation to another. The polypeptide is Ribosome-recycling factor (Rickettsia canadensis (strain McKiel)).